A 360-amino-acid polypeptide reads, in one-letter code: Photosystem II protein D1 2 (360 aa).

The Cytoplasmic segment spans residues M1–G31. The helical transmembrane segment at W32–I53 threads the bilayer. The Lumenal, thylakoid segment spans residues A54–G110. Residues P111–S134 traverse the membrane as a helical segment. Residue H118 participates in chlorophyll a binding. Residue Y126 coordinates pheophytin a. Residues Y135–W142 are Cytoplasmic-facing. A helical membrane pass occupies residues I143 to Y161. Y147 provides a ligand contact to pheophytin a. The Lumenal, thylakoid portion of the chain corresponds to P162–N191. Residues D170 and E189 each coordinate [CaMn4O5] cluster. The chain crosses the membrane as a helical span at residues I192 to L218. Residue H198 coordinates chlorophyll a. Residues H215, S264, and F265 each coordinate a quinone. Residue H215 participates in Fe cation binding. At V219 to S270 the chain is on the cytoplasmic side. Residues L271 to F295 traverse the membrane as a helical segment. H272 provides a ligand contact to Fe cation. Topologically, residues N296–G360 are lumenal, thylakoid. [CaMn4O5] cluster contacts are provided by H332, E333, H337, D342, and A344. A propeptide spanning residues S345–G360 is cleaved from the precursor.

The protein belongs to the reaction center PufL/M/PsbA/D family. As to quaternary structure, PSII is composed of 1 copy each of membrane proteins PsbA, PsbB, PsbC, PsbD, PsbE, PsbF, PsbH, PsbI, PsbJ, PsbK, PsbL, PsbM, PsbT, PsbX, PsbY, PsbZ, Psb30/Ycf12, peripheral proteins PsbO, CyanoQ (PsbQ), PsbU, PsbV and a large number of cofactors. It forms dimeric complexes. The D1/D2 heterodimer binds P680, chlorophylls that are the primary electron donor of PSII, and subsequent electron acceptors. It shares a non-heme iron and each subunit binds pheophytin, quinone, additional chlorophylls, carotenoids and lipids. D1 provides most of the ligands for the Mn4-Ca-O5 cluster of the oxygen-evolving complex (OEC). There is also a Cl(-1) ion associated with D1 and D2, which is required for oxygen evolution. The PSII complex binds additional chlorophylls, carotenoids and specific lipids. serves as cofactor. Post-translationally, C-terminally processed by CtpA; processing is essential to allow assembly of the oxygen-evolving complex and photosynthetic growth. In terms of processing, tyr-161 forms a radical intermediate that is referred to as redox-active TyrZ, YZ or Y-Z.

Its subcellular location is the cellular thylakoid membrane. The enzyme catalyses 2 a plastoquinone + 4 hnu + 2 H2O = 2 a plastoquinol + O2. Functionally, photosystem II (PSII) is a light-driven water:plastoquinone oxidoreductase that uses light energy to abstract electrons from H(2)O, generating O(2) and a proton gradient subsequently used for ATP formation. It consists of a core antenna complex that captures photons, and an electron transfer chain that converts photonic excitation into a charge separation. The D1/D2 (PsbA/PsbD) reaction center heterodimer binds P680, the primary electron donor of PSII as well as several subsequent electron acceptors. The protein is Photosystem II protein D1 2 of Synechocystis sp. (strain ATCC 27184 / PCC 6803 / Kazusa).